The sequence spans 492 residues: MTRVGQRDSPAKEEAPPATKKRFLTPGRFVTILCIINLINYVDRGVIASNGVNGSSKVCDAKGVCSAGTGIQGEFNLTNFEDGLLSSAFMVGLLVASPIFAGLSKRFNPFKLIGVGLTVWTIAVIGCGFSYNFWMIAVFRMFVGVGEASFISLAAPYIDDSAPVARKNFWLGLFYMCIPAGVALGYVFGGYIGNHLGWRWAFYIEAIAMAVFVILSFCIKPPQQLKGFADKDSKKPSTSIETVAPTDAEASQIKTKTPKSKNLVVLFGKDLKALFSEKVFIVNVLGYITYNFVIGAYSYWGPKAGFGIYKMKNADMIFGGLTIICGIIGTLGGSYVLDRINATLSNTFKLLAASTLLGAAFCFTAFLMKNMYAFIALFAVGEILIFAPQAPVNFVCLHCVRPNLRPLSMASSTVLIHILGDVPSSPLYGKMQDHLKNWRKSTLIITSILFLAAIIWGIGIFMNSVDRSNEVSEDDEVEEDKLESKTENSTLA.

Residues 29–49 (FVTILCIINLINYVDRGVIAS) traverse the membrane as a helical segment. N-linked (GlcNAc...) asparagine glycans are attached at residues Asn53 and Asn76. The next 7 membrane-spanning stretches (helical) occupy residues 83 to 103 (GLLSSAFMVGLLVASPIFAGL), 119 to 139 (VWTIAVIGCGFSYNFWMIAVF), 141 to 161 (MFVGVGEASFISLAAPYIDDS), 169 to 189 (FWLGLFYMCIPAGVALGYVFG), 200 to 220 (WAFYIEAIAMAVFVILSFCIK), 279 to 299 (VFIVNVLGYITYNFVIGAYSY), and 317 to 337 (IFGGLTIICGIIGTLGGSYVL). An N-linked (GlcNAc...) asparagine glycan is attached at Asn341. A run of 4 helical transmembrane segments spans residues 348-368 (FKLLAASTLLGAAFCFTAFLM), 372-392 (YAFIALFAVGEILIFAPQAPV), 407-427 (LSMASSTVLIHILGDVPSSPL), and 442-462 (TLIITSILFLAAIIWGIGIFM). The residue at position 472 (Ser472) is a Phosphoserine. Over residues 472 to 481 (SEDDEVEEDK) the composition is skewed to acidic residues. The segment at 472–492 (SEDDEVEEDKLESKTENSTLA) is disordered. A glycan (N-linked (GlcNAc...) asparagine) is linked at Asn488.

It belongs to the major facilitator superfamily. Spinster (TC 2.A.1.49) family.

Its subcellular location is the late endosome membrane. It is found in the lysosome membrane. Probable sphingolipid transporter that plays a central role in endosomes and/or lysosomes storage. This chain is Probable sphingolipid transporter spinster homolog 1, found in Arabidopsis thaliana (Mouse-ear cress).